The primary structure comprises 141 residues: Large ribosomal subunit protein uL16 (141 aa).

It belongs to the universal ribosomal protein uL16 family. Part of the 50S ribosomal subunit.

In terms of biological role, binds 23S rRNA and is also seen to make contacts with the A and possibly P site tRNAs. The protein is Large ribosomal subunit protein uL16 of Geobacillus kaustophilus (strain HTA426).